The sequence spans 415 residues: 3-isopropylmalate dehydratase large subunit (415 aa).

The [4Fe-4S] cluster site is built by Cys-295, Cys-353, and Cys-356.

The protein belongs to the aconitase/IPM isomerase family. LeuC type 2 subfamily. As to quaternary structure, heterodimer of LeuC and LeuD. Requires [4Fe-4S] cluster as cofactor.

The catalysed reaction is (2R,3S)-3-isopropylmalate = (2S)-2-isopropylmalate. It participates in amino-acid biosynthesis; L-leucine biosynthesis; L-leucine from 3-methyl-2-oxobutanoate: step 2/4. Functionally, catalyzes the isomerization between 2-isopropylmalate and 3-isopropylmalate, via the formation of 2-isopropylmaleate. The polypeptide is 3-isopropylmalate dehydratase large subunit (Pyrobaculum neutrophilum (strain DSM 2338 / JCM 9278 / NBRC 100436 / V24Sta) (Thermoproteus neutrophilus)).